A 272-amino-acid chain; its full sequence is Short-chain dehydrogenase srdC (272 aa).

Positions 15, 65, 127, 173, 177, 206, and 208 each coordinate NADP(+). The active-site Proton donor is tyrosine 173. Lysine 177 acts as the Lowers pKa of active site Tyr in catalysis.

This sequence belongs to the short-chain dehydrogenases/reductases (SDR) family.

Its function is as follows. Short-chain dehydrogenase; part of the gene cluster that mediates the biosynthesis of sordarial, a salicylic aldehyde structurally related to the phytotoxin pyriculol. The most interesting aspect of this pathway is formation of an aromatic product from the highly reducing polyketide synthase srdA. SrdA synthesizes a reduced polyketide chain from one molecule of acetyl-CoA and five molecules of malonyl-CoA. The polyketide chain is then reductively released as an aldehyde. The oxidoreductases srdC, srdD and srdE then oxidize one of the hydroxy groups to facilitate the intramolecular aldol condensation, followed by dehydration to yield a salicylic aldehyde. This aldehyde can undergo facile reduction by endogenous reductases to yield the alcohol 1-hydroxy-2-hydroxymethyl-3-pent-1,3-dienylbenzene. The flavin-dependent srdI counteract against the propensity of the aldehydes to be reduced under physiological conditions and is responsible for reoxidizing 1-hydroxy-2-hydroxymethyl-3-pent-1,3-dienylbenzene back to the salicylic aldehyde. This salicylic aldehyde is then selectively epoxidized by the cupin-domain-containing oxidoreductase srdB to yield the epoxide, which can be hydrolyzed stereoselectively by the hydrolase srdG to give the final product sordarial. The sequence is that of Short-chain dehydrogenase srdC from Neurospora crassa (strain ATCC 24698 / 74-OR23-1A / CBS 708.71 / DSM 1257 / FGSC 987).